A 312-amino-acid chain; its full sequence is Large ribosomal subunit protein uL10 (312 aa).

The tract at residues 287–312 (AAAAPAAKKEEPKEESDDDMGFGLFD) is disordered.

This sequence belongs to the universal ribosomal protein uL10 family. As to quaternary structure, P0 forms a pentameric complex by interaction with dimers of P1 and P2. Phosphorylated.

Functionally, ribosomal protein P0 is the functional equivalent of E.coli protein L10. The protein is Large ribosomal subunit protein uL10 of Caenorhabditis elegans.